Reading from the N-terminus, the 207-residue chain is Uridine kinase (207 aa).

Residue 11–18 (GGSGSGKT) coordinates ATP.

The protein belongs to the uridine kinase family.

The protein resides in the cytoplasm. The catalysed reaction is uridine + ATP = UMP + ADP + H(+). It catalyses the reaction cytidine + ATP = CMP + ADP + H(+). It functions in the pathway pyrimidine metabolism; CTP biosynthesis via salvage pathway; CTP from cytidine: step 1/3. Its pathway is pyrimidine metabolism; UMP biosynthesis via salvage pathway; UMP from uridine: step 1/1. The chain is Uridine kinase from Staphylococcus epidermidis (strain ATCC 35984 / DSM 28319 / BCRC 17069 / CCUG 31568 / BM 3577 / RP62A).